Here is a 254-residue protein sequence, read N- to C-terminus: Transmembrane protein 70, mitochondrial (254 aa).

The N-terminal 78 residues, 1–78 (MLFLALGGPW…PVCWERGVRC (78 aa)), are a transit peptide targeting the mitochondrion. At 79 to 112 (SHTQLDKSEDGRLIYTGNLARTVFGVKCFSYSTS) the chain is on the mitochondrial matrix side. Residues 113–133 (LISLAFLPYIFAQNNVIFGSL) form a helical membrane-spanning segment. Residues 134–136 (PLQ) are Mitochondrial intermembrane-facing. Residues 137–157 (ILFYGTIGSFTVITPALLHFL) form a helical membrane-spanning segment. The Mitochondrial matrix segment spans residues 158–254 (TKGYVIRLYH…SEKKQLKEEK (97 aa)).

This sequence belongs to the TMEM70 family. In terms of assembly, homooligomer. Interacts (homooligomer form) with ATP5MC1; this interaction facilitates the oligomer formation of subunit c/ATP5MC1 (c-ring) and the c-ring membrane insertion and also protects ATP5MC1 against intramitochondrial proteolysis. Interacts with the core subunits TMEM126B, NDUFAF1, ECSIT and ACAD9 of the MCIA complex. Interacts with ATP5MC3, TMEM242 and TIMMDC1.

The protein localises to the mitochondrion inner membrane. Scaffold protein that participates in the c-ring assembly of mitochondrial ATP synthase (F(1)F(0) ATP synthase or complex V) by facilitating the membrane insertion and oligomer formation of the subunit c/ATP5MC1 through its interaction. Therefore, participates in the early stage of mitochondrial ATP synthase biogenesis and also protects subunit c/ATP5MC1 against intramitochondrial proteolysis. In addition, binds the mitochondrial proton-transporting ATP synthase complexes I and may play a role in the stability of its membrane-bound subassemblies. This chain is Transmembrane protein 70, mitochondrial, found in Bos taurus (Bovine).